Consider the following 123-residue polypeptide: uncharacterized protein (123 aa).

The Rhodanese domain maps to 17-117; the sequence is SNDNAFLVDV…NNQDKGWKQN (101 aa).

This is an uncharacterized protein from Rickettsia conorii (strain ATCC VR-613 / Malish 7).